The sequence spans 151 residues: Caveolin-3 (151 aa).

At 1-83 (MMAEEHTDLE…RLLSTLLGVP (83 aa)) the chain is on the cytoplasmic side. Residue lysine 38 forms a Glycyl lysine isopeptide (Lys-Gly) (interchain with G-Cter in SUMO3) linkage. The interval 64 to 114 (TFTVSKYWCYRLLSTLLGVPLALLWGFLFACISFCHIWAVVPCIKSYLIEI) is required for interaction with DAG1. Residues 84-104 (LALLWGFLFACISFCHIWAVV) constitute an intramembrane region (helical). The Cytoplasmic portion of the chain corresponds to 105 to 151 (PCIKSYLIEIQCISHIYSLCIRTFCNPLFAALGQVCSSIKVVLRKEV).

It belongs to the caveolin family. As to quaternary structure, homooligomer. Interacts with DLG1 and KCNA5; forms a ternary complex. Interacts with TRIM72. Interacts with MUSK; may regulate MUSK signaling. Interacts with DAG1 (via its C-terminal); the interaction prevents binding of DAG1 with DMD. Interacts with DYSF. Interacts with POPDC1. Interacts with CAVIN1 and CAVIN2. Interacts with CAVIN4. Post-translationally, sumoylation with SUMO3 by PIAS4 may reduce agonist-induced internalization and desensitization of adrenergic receptor ABRD2. In terms of tissue distribution, expressed predominantly in muscle.

Its subcellular location is the golgi apparatus membrane. The protein resides in the cell membrane. It localises to the membrane. It is found in the caveola. The protein localises to the sarcolemma. May act as a scaffolding protein within caveolar membranes. Interacts directly with G-protein alpha subunits and can functionally regulate their activity. May also regulate voltage-gated potassium channels. Plays a role in the sarcolemma repair mechanism of both skeletal muscle and cardiomyocytes that permits rapid resealing of membranes disrupted by mechanical stress. Mediates the recruitment of CAVIN2 and CAVIN3 proteins to the caveolae. In Homo sapiens (Human), this protein is Caveolin-3 (CAV3).